Consider the following 315-residue polypeptide: Thymidylate synthase (315 aa).

DUMP-binding positions include R29 and 156–157; that span reads RR. Catalysis depends on C176, which acts as the Nucleophile. DUMP is bound by residues 213-216, N224, and 254-256; these read RSCD and HVY. D216 provides a ligand contact to (6R)-5,10-methylene-5,6,7,8-tetrahydrofolate.

This sequence belongs to the thymidylate synthase family. Homodimer.

The enzyme catalyses dUMP + (6R)-5,10-methylene-5,6,7,8-tetrahydrofolate = 7,8-dihydrofolate + dTMP. It functions in the pathway pyrimidine metabolism; dTTP biosynthesis. The polypeptide is Thymidylate synthase (TMP1) (Candida albicans (strain SC5314 / ATCC MYA-2876) (Yeast)).